The primary structure comprises 340 residues: Phosphate acyltransferase (340 aa).

It belongs to the PlsX family. In terms of assembly, homodimer. Probably interacts with PlsY.

The protein localises to the cytoplasm. The catalysed reaction is a fatty acyl-[ACP] + phosphate = an acyl phosphate + holo-[ACP]. It participates in lipid metabolism; phospholipid metabolism. Its function is as follows. Catalyzes the reversible formation of acyl-phosphate (acyl-PO(4)) from acyl-[acyl-carrier-protein] (acyl-ACP). This enzyme utilizes acyl-ACP as fatty acyl donor, but not acyl-CoA. The sequence is that of Phosphate acyltransferase from Helicobacter pylori (strain HPAG1).